The primary structure comprises 437 residues: GTPase Obg (437 aa).

In terms of domain architecture, Obg spans 2–160 (SMFLDTAKIS…RQLELELKIL (159 aa)). One can recognise an OBG-type G domain in the interval 161-338 (ADVGLVGFPS…LLEATAELLA (178 aa)). GTP is bound by residues 167–174 (GFPSVGKS), 192–196 (FTTIV), 214–217 (DLPG), 284–287 (NKMD), and 319–321 (SSL). Mg(2+)-binding residues include Ser174 and Thr194. The 79-residue stretch at 359-437 (GFAEAEKDFE…IGKFEFEFVD (79 aa)) folds into the OCT domain.

Belongs to the TRAFAC class OBG-HflX-like GTPase superfamily. OBG GTPase family. In terms of assembly, monomer. It depends on Mg(2+) as a cofactor.

It localises to the cytoplasm. Functionally, an essential GTPase which binds GTP, GDP and possibly (p)ppGpp with moderate affinity, with high nucleotide exchange rates and a fairly low GTP hydrolysis rate. Plays a role in control of the cell cycle, stress response, ribosome biogenesis and in those bacteria that undergo differentiation, in morphogenesis control. The polypeptide is GTPase Obg (Streptococcus pyogenes serotype M18 (strain MGAS8232)).